The chain runs to 838 residues: Collagen alpha-2(I) chain (838 aa).

The tract at residues 1–838 is disordered; it reads GPMGIMGPRG…GTVGPAGIRS (838 aa). Residues 11–38 show a composition bias toward low complexity; it reads FQGPAGEPGEPGQTGPAGARGPAGPPGK. The span at 39–53 shows a compositional bias: basic and acidic residues; that stretch reads AGEDGHPGKPGRPGE. Composition is skewed to low complexity over residues 101–122, 137–147, 215–236, and 329–344; these read SRGS…SAGP, PVGNTGPAGPA, NGES…RGIP, and AGNR…NGAQ. Residues 351 to 360 are compositionally biased toward gly residues; that stretch reads GVQGGKGEQG. Composition is skewed to low complexity over residues 407–424 and 436–446; these read PGES…SRGP and EPGVVGAPGTA. Gly residues predominate over residues 447–456; sequence GPAGSGGIPG. Low complexity-rich tracts occupy residues 479 to 523, 530 to 550, and 568 to 581; these read VGTT…PRGT, VGPA…QPGA, and SAGP…PGPA. Positions 582–591 are enriched in gly residues; sequence GSRGDGGPPG. A compositionally biased stretch (low complexity) spans 593–602; the sequence is TGFPGAAGRT. The span at 633–642 shows a compositional bias: gly residues; the sequence is GETGAGGPPG. Low complexity predominate over residues 649–689; it reads TAGPQGIIGAPGIIGIPGSRGIPGVSGSVGEPGPIGISGPP. Residues 693-702 show a composition bias toward gly residues; sequence GPSGGVGNPG. Low complexity-rich tracts occupy residues 703-718, 736-758, and 766-781; these read VNGA…NPGN, YAGN…VGPA, and EPGP…AIGP.

It belongs to the fibrillar collagen family. In terms of assembly, trimers of one alpha 2(I) and two alpha 1(I) chains. Interacts (via C-terminus) with TMEM131 (via PapD-L domain); the interaction is direct and is involved in assembly and TRAPPIII ER-to-Golgi transport complex-dependent secretion of collagen. Post-translationally, prolines at the third position of the tripeptide repeating unit (G-X-Y) are hydroxylated in some or all of the chains. In terms of tissue distribution, forms the fibrils of tendon, ligaments and bones. In bones, the fibrils are mineralized with calcium hydroxyapatite.

Its subcellular location is the secreted. It is found in the extracellular space. It localises to the extracellular matrix. Type I collagen is a member of group I collagen (fibrillar forming collagen). This Cyclopes didactylus (Silky anteater) protein is Collagen alpha-2(I) chain.